Reading from the N-terminus, the 197-residue chain is Ras-related protein Rab-7B (197 aa).

Residues 14–21 (GEKSVGKT), 33–38 (VTLKPT), 57–61 (DTSGQ), 119–122 (NKID), and 152–153 (AK) contribute to the GTP site. Residues 31-39 (RFVTLKPTI) carry the Effector region motif. Residues Cys-196 and Cys-197 are each lipidated (S-geranylgeranyl cysteine).

It belongs to the small GTPase superfamily. Rab family.

Its function is as follows. Protein transport. Probably involved in vesicular traffic. The sequence is that of Ras-related protein Rab-7B (rab7B) from Dictyostelium discoideum (Social amoeba).